The chain runs to 432 residues: Adenylosuccinate synthetase (432 aa).

Residues 12 to 18 (GDEGKGK) and 40 to 42 (GHT) each bind GTP. The Proton acceptor role is filled by Asp-13. Residues Asp-13 and Gly-40 each coordinate Mg(2+). IMP-binding positions include 13–16 (DEGK), 38–41 (NAGH), Thr-130, Arg-144, Gln-225, Thr-240, and Arg-304. His-41 (proton donor) is an active-site residue. Position 300–306 (300–306 (ATTGRPR)) interacts with substrate. GTP is bound by residues Arg-306, 332-334 (KLD), and 414-416 (SVG).

It belongs to the adenylosuccinate synthetase family. As to quaternary structure, homodimer. It depends on Mg(2+) as a cofactor.

The protein resides in the cytoplasm. It catalyses the reaction IMP + L-aspartate + GTP = N(6)-(1,2-dicarboxyethyl)-AMP + GDP + phosphate + 2 H(+). It functions in the pathway purine metabolism; AMP biosynthesis via de novo pathway; AMP from IMP: step 1/2. In terms of biological role, plays an important role in the de novo pathway of purine nucleotide biosynthesis. Catalyzes the first committed step in the biosynthesis of AMP from IMP. This chain is Adenylosuccinate synthetase, found in Anaeromyxobacter sp. (strain K).